The sequence spans 369 residues: Signal recognition particle receptor FtsY (369 aa).

The span at 20-42 (GEENKKEPETRQTDQLESKKEET) shows a compositional bias: basic and acidic residues. A disordered region spans residues 20–58 (GEENKKEPETRQTDQLESKKEETIQQQQNVQQPQAENKI). Residues 44 to 53 (QQQQNVQQPQ) are compositionally biased toward low complexity. GTP-binding positions include 180 to 187 (GVNGVGKT), 262 to 266 (DTAGR), and 320 to 323 (TKVD).

This sequence belongs to the GTP-binding SRP family. FtsY subfamily. As to quaternary structure, part of the signal recognition particle protein translocation system, which is composed of SRP and FtsY.

It localises to the cell membrane. Its subcellular location is the cytoplasm. It carries out the reaction GTP + H2O = GDP + phosphate + H(+). Involved in targeting and insertion of nascent membrane proteins into the cytoplasmic membrane. Acts as a receptor for the complex formed by the signal recognition particle (SRP) and the ribosome-nascent chain (RNC). In Sulfolobus acidocaldarius (strain ATCC 33909 / DSM 639 / JCM 8929 / NBRC 15157 / NCIMB 11770), this protein is Signal recognition particle receptor FtsY.